The following is a 175-amino-acid chain: Ribosome maturation factor RimM (175 aa).

The 80-residue stretch at Glu96–Phe175 folds into the PRC barrel domain.

It belongs to the RimM family. Binds ribosomal protein uS19.

It is found in the cytoplasm. In terms of biological role, an accessory protein needed during the final step in the assembly of 30S ribosomal subunit, possibly for assembly of the head region. Essential for efficient processing of 16S rRNA. May be needed both before and after RbfA during the maturation of 16S rRNA. It has affinity for free ribosomal 30S subunits but not for 70S ribosomes. In Aliivibrio fischeri (strain ATCC 700601 / ES114) (Vibrio fischeri), this protein is Ribosome maturation factor RimM.